The sequence spans 168 residues: Ubiquitin-fold modifier-conjugating enzyme 1 (168 aa).

Catalysis depends on Cys119, which acts as the Glycyl thioester intermediate.

This sequence belongs to the ubiquitin-conjugating enzyme family. UFC1 subfamily.

Its function is as follows. E2-like enzyme which forms an intermediate with UFM1 via a thioester linkage. The sequence is that of Ubiquitin-fold modifier-conjugating enzyme 1 from Drosophila grimshawi (Hawaiian fruit fly).